A 133-amino-acid chain; its full sequence is UPF0102 protein Plav_3586 (133 aa).

It belongs to the UPF0102 family.

The chain is UPF0102 protein Plav_3586 from Parvibaculum lavamentivorans (strain DS-1 / DSM 13023 / NCIMB 13966).